We begin with the raw amino-acid sequence, 388 residues long: MNLHEYQAKALLKEYGMPVQEGILATNADEAVAAFEQLGGKFAVMKAQVHAGGRGKAGGVKVAKSKEDVIEFANNIIGTRLVTYQTDANGQPVNSIIVAEDVYPVERELYLGAVVDRSSRRITFMASTEGGVEIEKVAEETPEKIIKVEVDPLVGLQPFQAREVAFALGLKDKQIGQFVKIMTAAYQAFVENDFALFEINPLSVRENGEILCVDAKVGIDSNALYRLPKVAALRDKSQENERELKASEFDLNYVALEGNIGCMVNGAGLAMATMDIIKLYGGQPANFLDVGGGATKERVIEAFKIILADTSVQGVLINIFGGIVRCDMIAEAIIAAVQEVNVTVPVVVRLEGNNAELGAKLLDESGLKLISANGLSDAAEKVVAAVKA.

In terms of domain architecture, ATP-grasp spans 9 to 245 (KALLKEYGMP…KSQENERELK (237 aa)). Residues Lys46, 53–55 (GRG), Glu100, Tyr103, and Glu108 each bind ATP. Positions 200 and 214 each coordinate Mg(2+). Residues Asn265 and 322–324 (GIV) contribute to the substrate site.

This sequence belongs to the succinate/malate CoA ligase beta subunit family. As to quaternary structure, heterotetramer of two alpha and two beta subunits. It depends on Mg(2+) as a cofactor.

It catalyses the reaction succinate + ATP + CoA = succinyl-CoA + ADP + phosphate. The catalysed reaction is GTP + succinate + CoA = succinyl-CoA + GDP + phosphate. The protein operates within carbohydrate metabolism; tricarboxylic acid cycle; succinate from succinyl-CoA (ligase route): step 1/1. In terms of biological role, succinyl-CoA synthetase functions in the citric acid cycle (TCA), coupling the hydrolysis of succinyl-CoA to the synthesis of either ATP or GTP and thus represents the only step of substrate-level phosphorylation in the TCA. The beta subunit provides nucleotide specificity of the enzyme and binds the substrate succinate, while the binding sites for coenzyme A and phosphate are found in the alpha subunit. The polypeptide is Succinate--CoA ligase [ADP-forming] subunit beta (Acinetobacter baumannii (strain AB307-0294)).